The following is a 105-amino-acid chain: Pyrimidine/purine nucleoside phosphorylase (105 aa).

It belongs to the nucleoside phosphorylase PpnP family.

It carries out the reaction a purine D-ribonucleoside + phosphate = a purine nucleobase + alpha-D-ribose 1-phosphate. The enzyme catalyses adenosine + phosphate = alpha-D-ribose 1-phosphate + adenine. The catalysed reaction is cytidine + phosphate = cytosine + alpha-D-ribose 1-phosphate. It catalyses the reaction guanosine + phosphate = alpha-D-ribose 1-phosphate + guanine. It carries out the reaction inosine + phosphate = alpha-D-ribose 1-phosphate + hypoxanthine. The enzyme catalyses thymidine + phosphate = 2-deoxy-alpha-D-ribose 1-phosphate + thymine. The catalysed reaction is uridine + phosphate = alpha-D-ribose 1-phosphate + uracil. It catalyses the reaction xanthosine + phosphate = alpha-D-ribose 1-phosphate + xanthine. Its function is as follows. Catalyzes the phosphorolysis of diverse nucleosides, yielding D-ribose 1-phosphate and the respective free bases. Can use uridine, adenosine, guanosine, cytidine, thymidine, inosine and xanthosine as substrates. Also catalyzes the reverse reactions. In Clostridioides difficile (strain 630) (Peptoclostridium difficile), this protein is Pyrimidine/purine nucleoside phosphorylase.